The sequence spans 336 residues: Gibberellin 2-beta-dioxygenase 7 (336 aa).

The 101-residue stretch at 191–291 (LENSFLRLNK…RMSIAFFVCP (101 aa)) folds into the Fe2OG dioxygenase domain. H216, D218, and H272 together coordinate Fe cation. The active site involves R282. R282 contacts 2-oxoglutarate.

The protein belongs to the iron/ascorbate-dependent oxidoreductase family. GA2OX subfamily. Fe(2+) is required as a cofactor.

The catalysed reaction is gibberellin A1 + 2-oxoglutarate + O2 = gibberellin A8 + succinate + CO2. The protein operates within plant hormone biosynthesis; gibberellin biosynthesis. Catalyzes the 2-beta-hydroxylation of gibberellins (GA) precursors, rendering them unable to be converted to active GAs. Hydroxylates the C20-GA GA12 and GA53, but is not active on C19-GAs, like GA1, GA4, GA9 and GA20. The sequence is that of Gibberellin 2-beta-dioxygenase 7 (GA2OX7) from Arabidopsis thaliana (Mouse-ear cress).